Reading from the N-terminus, the 170-residue chain is Adenine phosphoribosyltransferase (170 aa).

It belongs to the purine/pyrimidine phosphoribosyltransferase family. Homodimer.

The protein localises to the cytoplasm. It carries out the reaction AMP + diphosphate = 5-phospho-alpha-D-ribose 1-diphosphate + adenine. It participates in purine metabolism; AMP biosynthesis via salvage pathway; AMP from adenine: step 1/1. In terms of biological role, catalyzes a salvage reaction resulting in the formation of AMP, that is energically less costly than de novo synthesis. This Bacillus licheniformis (strain ATCC 14580 / DSM 13 / JCM 2505 / CCUG 7422 / NBRC 12200 / NCIMB 9375 / NCTC 10341 / NRRL NRS-1264 / Gibson 46) protein is Adenine phosphoribosyltransferase.